A 1768-amino-acid polypeptide reads, in one-letter code: Maestro heat-like repeat-containing protein family member 1 homolog (1768 aa).

6 HEAT repeats span residues 4–47 (TSQV…HQPN), 164–203 (VHNPFGLVPFLTDILSRTVPLLQHVKTDPLRCAWARAICS), 816–856 (QRLQ…AVHP), 1166–1204 (QSQMQIYLSAIFEMLTDRQSHVSSAAAQLLTYAVMARGA), 1483–1521 (EQLLVKCIRRLEDSLTDPSLRIRKLCVKGLGELSECSST), and 1731–1768 (TISRELVFTGLVALLKDSEDVNVRISATRAIANLHDFH).

The protein belongs to the MROH1 family. As to quaternary structure, homooligomer; homooligomerizes at lysosome scission sites.

It is found in the lysosome membrane. Its function is as follows. Lysosome fission factor. Recruited to lysosomes by rab-7 at scission sites and homooligomerizes to mediate the constriction and scission of lysosomal tubules. May sever membranes by inserting amphipathic helices into one bilayer leaflet. Lysosome fission is required to maintain their steady-state number, shape, size, composition and function, and to accomplish regeneration. The sequence is that of Maestro heat-like repeat-containing protein family member 1 homolog from Caenorhabditis elegans.